Reading from the N-terminus, the 138-residue chain is Cysteine desulfuration protein SufE (138 aa).

Cys51 acts as the Cysteine persulfide intermediate in catalysis.

This sequence belongs to the SufE family. Homodimer. Interacts with SufS.

It is found in the cytoplasm. It participates in cofactor biosynthesis; iron-sulfur cluster biosynthesis. In terms of biological role, participates in cysteine desulfuration mediated by SufS. Cysteine desulfuration mobilizes sulfur from L-cysteine to yield L-alanine and constitutes an essential step in sulfur metabolism for biosynthesis of a variety of sulfur-containing biomolecules. Functions as a sulfur acceptor for SufS, by mediating the direct transfer of the sulfur atom from the S-sulfanylcysteine of SufS, an intermediate product of cysteine desulfuration process. The chain is Cysteine desulfuration protein SufE from Shigella boydii serotype 18 (strain CDC 3083-94 / BS512).